Here is a 417-residue protein sequence, read N- to C-terminus: Interferon regulatory factor 3 (417 aa).

At T3 the chain carries Phosphothreonine. A DNA-binding region (IRF tryptophan pentad repeat) is located at residues 5–111; the sequence is KPRILPWLIS…DPHKIYEFVN (107 aa). Position 14 is a phosphoserine (S14). Phosphothreonine is present on T75. Phosphoserine occurs at positions 97 and 123. 2 disordered regions span residues 111-134 and 147-170; these read NSGV…TSDT and DLSP…LQSP. A mediates interaction with ZDHHC11 region spans residues 140-417; the sequence is EKLLSDMDLS…LQDLAEDMDF (278 aa). Position 184 is a phosphoserine (S184). K189 is covalently cross-linked (Glycyl lysine isopeptide (Lys-Gly) (interchain with G-Cter in ISG15)). The interaction with HERC5 stretch occupies residues 196–356; the sequence is EDWEFEVTAF…SWPQDQPWIK (161 aa). T249 is subject to Phosphothreonine. The cysteines at positions 263 and 285 are disulfide-linked. Residues K356 and K362 each participate in a glycyl lysine isopeptide (Lys-Gly) (interchain with G-Cter in ISG15) cross-link. K362 bears the N6-acetyllysine mark. A Phosphoserine modification is found at S381. Diphosphoserine is present on S382. S382 carries the phosphoserine; by TBK1 modification. Phosphoserine; by IKKE is present on S392. Position 394 is a phosphoserine (S394). T400 carries the post-translational modification Phosphothreonine.

The protein belongs to the IRF family. As to quaternary structure, monomer. Homodimer; phosphorylation-induced. Interacts (when phosphorylated) with CREBBP. Interacts with MAVS (via phosphorylated pLxIS motif). Interacts with TICAM1 (via phosphorylated pLxIS motif). Interacts with STING1 (via phosphorylated pLxIS motif). Interacts with IKBKE and TBK1. Interacts with TICAM2. Interacts with RBCK1. Interacts with HERC5. Interacts with DDX3X; the interaction allows the phosphorylation and activation of IRF3 by IKBKE. Interacts with TRIM21 and ULK1, in the presence of TRIM21; this interaction leads to IRF3 degradation by autophagy. Interacts with RIOK3; RIOK3 probably mediates the interaction of TBK1 with IRF3. Interacts with ILRUN; the interaction inhibits IRF3 binding to its DNA consensus sequence. Interacts with LYAR; this interaction impairs IRF3 DNA-binding activity. Interacts with TRAF3. Interacts with ZDHHC11; ZDHHC11 recruits IRF3 to STING1 upon DNA virus infection and thereby promotes IRF3 activation. Interacts with HSP90AA1; the interaction mediates IRF3 association with TOMM70. Interacts with BCL2; the interaction decreases upon Sendai virus infection. Interacts with BAX; the interaction is direct, increases upon virus infection and mediates the formation of the apoptosis complex TOMM70:HSP90AA1:IRF3:BAX. Interacts with DDX56. Interacts with NBR1. Constitutively phosphorylated on many Ser/Thr residues. Activated following phosphorylation by TBK1 and IKBKE. Innate adapter proteins, such as MAVS, STING1 or TICAM1, are first activated by viral RNA, cytosolic DNA, and bacterial lipopolysaccharide (LPS), respectively, leading to activation of the kinases TBK1 and IKBKE. These kinases then phosphorylate the adapter proteins on the pLxIS motif, leading to recruitment of IRF3, thereby licensing IRF3 for phosphorylation by TBK1. Phosphorylation at Ser-382 is followed by pyrophosphorylation at the same residue, promoting phosphorylation at Ser-392. Phosphorylated IRF3 dissociates from the adapter proteins, dimerizes, and then enters the nucleus to induce IFNs. Post-translationally, pyrophosphorylated by UAP1 following phosphorylation at Ser-382 by TBK1. Pyrophosphorylation promotes subsequent phosphorylation at Ser-392, leading to homodimerization of IRF3. In terms of processing, acetylation at Lys-362 by KAT8 inhibits recruimtent to promoters and transcription factor activity. Acetylation by KAT8 is promoted by phosphorylation at Ser-392. Ubiquitinated; ubiquitination involves RBCK1 leading to proteasomal degradation. Polyubiquitinated; ubiquitination involves TRIM21 leading to proteasomal degradation. Ubiquitinated by UBE3C, leading to its degradation. Deubiquitinated by USP5 on both 'Lys-48'-linked unanchored and 'Lys-63'-linked anchored polyubiquitin, leading to inhibition of anti-RNA viral innate immunity. Post-translationally, ISGylated by HERC5 resulting in sustained IRF3 activation and in the inhibition of IRF3 ubiquitination by disrupting PIN1 binding. The phosphorylation state of IRF3 does not alter ISGylation. In terms of processing, proteolytically cleaved by apoptotic caspases during apoptosis, leading to its inactivation. Cleavage by CASP3 during virus-induced apoptosis inactivates it, preventing cytokine overproduction.

Its subcellular location is the cytoplasm. The protein localises to the nucleus. The protein resides in the mitochondrion. Its activity is regulated as follows. In the absence of viral infection, maintained as a monomer in an autoinhibited state. Phosphorylation by TBK1 and IKBKE disrupts this autoinhibition leading to the liberation of the DNA-binding and dimerization activities and its nuclear localization where it can activate type I IFN and ISG genes. Phosphorylation and activation follow the following steps: innate adapter proteins, such as MAVS, STING1 or TICAM1, are first activated by viral RNA, cytosolic DNA and bacterial lipopolysaccharide (LPS), respectively, leading to activation of the kinases TBK1 and IKBKE. These kinases then phosphorylate the adapter proteins on their pLxIS motif, leading to recruitment of IRF3, thereby licensing IRF3 for phosphorylation by TBK1. Phosphorylated IRF3 dissociates from the adapter proteins, dimerizes, and then enters the nucleus to induce IFNs. Its function is as follows. Key transcriptional regulator of type I interferon (IFN)-dependent immune responses which plays a critical role in the innate immune response against DNA and RNA viruses. Regulates the transcription of type I IFN genes (IFN-alpha and IFN-beta) and IFN-stimulated genes (ISG) by binding to an interferon-stimulated response element (ISRE) in their promoters. Acts as a more potent activator of the IFN-beta (IFNB) gene than the IFN-alpha (IFNA) gene and plays a critical role in both the early and late phases of the IFNA/B gene induction. Found in an inactive form in the cytoplasm of uninfected cells and following viral infection, double-stranded RNA (dsRNA), or toll-like receptor (TLR) signaling, is phosphorylated by IKBKE and TBK1 kinases. This induces a conformational change, leading to its dimerization and nuclear localization and association with CREB binding protein (CREBBP) to form dsRNA-activated factor 1 (DRAF1), a complex which activates the transcription of the type I IFN and ISG genes. Can activate distinct gene expression programs in macrophages and can induce significant apoptosis in primary macrophages. In Bos taurus (Bovine), this protein is Interferon regulatory factor 3 (IRF3).